Consider the following 306-residue polypeptide: Peroxisomal protein PEX21 (306 aa).

Cys4 is covalently cross-linked (Glycyl cysteine thioester (Cys-Gly) (interchain with G-Cter in ubiquitin)). Residues 172–203 are disordered; that stretch reads ERQVQDDEKEQQQDKDDDFHLKETSPLDEDQR.

Belongs to the peroxin-21 family. Interacts with PEX7. Post-translationally, monoubiquitinated at Cys-4; acts as a signal for PEX21 extraction and is required for proper export from peroxisomes and recycling.

Its subcellular location is the cytoplasm. The protein resides in the cytosol. The protein localises to the peroxisome. Its function is as follows. Mediates peroxisomal import of proteins containing a C-terminal PTS2-type peroxisomal targeting signal via its interaction with PEX7. Interaction with PEX7 only takes place when PEX7 is associated with cargo proteins containing a PTS2 peroxisomal targeting signal. PEX7 along with PTS2-containing cargo proteins are then translocated through the PEX13-PEX14 docking complex together with PEX21. This Kluyveromyces lactis (strain ATCC 8585 / CBS 2359 / DSM 70799 / NBRC 1267 / NRRL Y-1140 / WM37) (Yeast) protein is Peroxisomal protein PEX21 (PEX21).